The following is a 65-amino-acid chain: Large ribosomal subunit protein uL29c (65 aa).

The protein belongs to the universal ribosomal protein uL29 family.

The protein localises to the plastid. The protein resides in the chloroplast. In Guillardia theta (Cryptophyte), this protein is Large ribosomal subunit protein uL29c (rpl29).